The chain runs to 576 residues: Septation ring formation regulator EzrA (576 aa).

The Extracellular segment spans residues 1 to 7 (MSSTVII). The helical transmembrane segment at 8 to 26 (LIVVLLVILVAFYAFAILM) threads the bilayer. The Cytoplasmic segment spans residues 27–576 (RKKTEDRILA…FKNKPTPDYL (550 aa)). 3 coiled-coil regions span residues 105 to 134 (RARE…VAQL), 254 to 305 (ENVN…FERE), and 356 to 402 (GYQE…IEKN).

This sequence belongs to the EzrA family.

It is found in the cell membrane. Functionally, negative regulator of FtsZ ring formation; modulates the frequency and position of FtsZ ring formation. Inhibits FtsZ ring formation at polar sites. Interacts either with FtsZ or with one of its binding partners to promote depolymerization. This Lactococcus lactis subsp. cremoris (strain MG1363) protein is Septation ring formation regulator EzrA.